The sequence spans 214 residues: Adenylate kinase (214 aa).

Residue Gly10 to Thr15 coordinates ATP. Positions Ser30–Val59 are NMP. AMP contacts are provided by residues Thr31, Arg36, Gln57–Val59, Gly85–Arg88, and Gln92. The tract at residues Gly122–Asp159 is LID. Residues Arg123 and Thr132–Tyr133 contribute to the ATP site. Residues Arg156 and Arg167 each coordinate AMP. Position 200 (Gly200) interacts with ATP.

It belongs to the adenylate kinase family. As to quaternary structure, monomer.

It localises to the cytoplasm. The enzyme catalyses AMP + ATP = 2 ADP. It participates in purine metabolism; AMP biosynthesis via salvage pathway; AMP from ADP: step 1/1. Catalyzes the reversible transfer of the terminal phosphate group between ATP and AMP. Plays an important role in cellular energy homeostasis and in adenine nucleotide metabolism. The sequence is that of Adenylate kinase from Methylococcus capsulatus (strain ATCC 33009 / NCIMB 11132 / Bath).